Consider the following 308-residue polypeptide: tRNA uridine(34) hydroxylase (308 aa).

The region spanning 129 to 223 (QEKDVLILDA…YGKHPETQGV (95 aa)) is the Rhodanese domain. Cys183 (cysteine persulfide intermediate) is an active-site residue.

The protein belongs to the TrhO family.

It carries out the reaction uridine(34) in tRNA + AH2 + O2 = 5-hydroxyuridine(34) in tRNA + A + H2O. Catalyzes oxygen-dependent 5-hydroxyuridine (ho5U) modification at position 34 in tRNAs. In Aster yellows witches'-broom phytoplasma (strain AYWB), this protein is tRNA uridine(34) hydroxylase.